The following is a 406-amino-acid chain: Succinylornithine transaminase (406 aa).

Residue Lys252 is modified to N6-(pyridoxal phosphate)lysine.

This sequence belongs to the class-III pyridoxal-phosphate-dependent aminotransferase family. AstC subfamily. Pyridoxal 5'-phosphate is required as a cofactor.

It catalyses the reaction N(2)-succinyl-L-ornithine + 2-oxoglutarate = N-succinyl-L-glutamate 5-semialdehyde + L-glutamate. Its pathway is amino-acid degradation; L-arginine degradation via AST pathway; L-glutamate and succinate from L-arginine: step 3/5. Functionally, catalyzes the transamination of N(2)-succinylornithine and alpha-ketoglutarate into N(2)-succinylglutamate semialdehyde and glutamate. Can also act as an acetylornithine aminotransferase. The polypeptide is Succinylornithine transaminase (Escherichia coli O17:K52:H18 (strain UMN026 / ExPEC)).